Here is a 256-residue protein sequence, read N- to C-terminus: Trans-aconitate 2-methyltransferase (256 aa).

The protein belongs to the methyltransferase superfamily. Tam family.

The protein localises to the cytoplasm. The catalysed reaction is trans-aconitate + S-adenosyl-L-methionine = (E)-3-(methoxycarbonyl)pent-2-enedioate + S-adenosyl-L-homocysteine. In terms of biological role, catalyzes the S-adenosylmethionine monomethyl esterification of trans-aconitate. In Rhodopseudomonas palustris (strain BisB5), this protein is Trans-aconitate 2-methyltransferase.